A 262-amino-acid chain; its full sequence is MNDKVTAVRDVWRYEQGEISKVEDRMVTEFPLTVILNGSEFVTLVCTPEHIEELVIGFLASEGVIRFQKEIKRFTIDESLGFVYVDLVHPETLDQKDYTKRVIGSCCGKGRHFYFQQDVKTAKTAVSQIKISPEACLALMKDMQQGSGTFQDTGGVHNAALCDTEKLLLMRTDIGRHNALDKLYGHCLLNGMSVRDKLIVFSGRISSEVLLKAAKIGVSIVISKSAPTELAIQMAEELNITAIGFVRNGSFNVYTHPERIRE.

The Cysteine persulfide intermediate role is filled by Cys107.

The protein belongs to the FdhD family.

The protein localises to the cytoplasm. Its function is as follows. Required for formate dehydrogenase (FDH) activity. Acts as a sulfur carrier protein that transfers sulfur from IscS to the molybdenum cofactor prior to its insertion into FDH. The protein is Sulfur carrier protein FdhD of Bacillus subtilis (strain 168).